The primary structure comprises 459 residues: uncharacterized protein (459 aa).

The region spanning 5 to 63 (PVEEGQKFPLTIRRMGINGEGIGYFKKAVVFVPGAITGEEVVVEAVKVRDRFTEAKLNK) is the TRAM domain. The [4Fe-4S] cluster site is built by Cys-76, Cys-82, Cys-85, and Cys-166. S-adenosyl-L-methionine-binding residues include Gln-290, Tyr-319, Asp-340, and Asp-388. Catalysis depends on Cys-415, which acts as the Nucleophile.

Belongs to the class I-like SAM-binding methyltransferase superfamily. RNA M5U methyltransferase family.

This is an uncharacterized protein from Listeria monocytogenes serovar 1/2a (strain ATCC BAA-679 / EGD-e).